The chain runs to 410 residues: Gamma-glutamyl phosphate reductase (410 aa).

It belongs to the gamma-glutamyl phosphate reductase family.

The protein resides in the cytoplasm. The catalysed reaction is L-glutamate 5-semialdehyde + phosphate + NADP(+) = L-glutamyl 5-phosphate + NADPH + H(+). It functions in the pathway amino-acid biosynthesis; L-proline biosynthesis; L-glutamate 5-semialdehyde from L-glutamate: step 2/2. Catalyzes the NADPH-dependent reduction of L-glutamate 5-phosphate into L-glutamate 5-semialdehyde and phosphate. The product spontaneously undergoes cyclization to form 1-pyrroline-5-carboxylate. This is Gamma-glutamyl phosphate reductase from Sulfurimonas denitrificans (strain ATCC 33889 / DSM 1251) (Thiomicrospira denitrificans (strain ATCC 33889 / DSM 1251)).